The sequence spans 158 residues: Cysteine proteinase inhibitor 4 (158 aa).

Residues 1–24 form the signal peptide; sequence MAARCPVGVASVLLLIVLVTVASA. The interval 26 to 51 is disordered; sequence SGARSGGGGGGGIRELRGGGAGRRVG. The span at 29–49 shows a compositional bias: gly residues; that stretch reads RSGGGGGGGIRELRGGGAGRR. The 66-residue stretch at 51–116 folds into the Cystatin domain; sequence GGRTEVRDVE…KYYLRVAAAE (66 aa). The short motif at 101-105 is the Secondary area of contact element; it reads QVVSG.

The protein belongs to the cystatin family. Phytocystatin subfamily.

The protein resides in the secreted. In terms of biological role, specific inhibitor of cysteine proteinases. Probably involved in the regulation of endogenous processes and in defense against pests and pathogens. This chain is Cysteine proteinase inhibitor 4, found in Oryza sativa subsp. japonica (Rice).